The sequence spans 255 residues: Glutamate racemase (255 aa).

Substrate is bound by residues 7 to 8 (DS) and 39 to 40 (YG). C70 acts as the Proton donor/acceptor in catalysis. 71 to 72 (NT) contacts substrate. The active-site Proton donor/acceptor is C181. 182–183 (TH) contacts substrate.

The protein belongs to the aspartate/glutamate racemases family.

It carries out the reaction L-glutamate = D-glutamate. It participates in cell wall biogenesis; peptidoglycan biosynthesis. Provides the (R)-glutamate required for cell wall biosynthesis. This Helicobacter acinonychis (strain Sheeba) protein is Glutamate racemase.